The chain runs to 336 residues: Protein-arginine kinase (336 aa).

Positions 22–245 (IVMSSRIRLA…QQIINEEMQI (224 aa)) constitute a Phosphagen kinase C-terminal domain. Residues 25 to 29 (SSRIR), histidine 83, arginine 116, 167 to 171 (RASVM), and 198 to 203 (RGIYGE) each bind ATP.

This sequence belongs to the ATP:guanido phosphotransferase family.

The catalysed reaction is L-arginyl-[protein] + ATP = N(omega)-phospho-L-arginyl-[protein] + ADP + H(+). Functionally, catalyzes the specific phosphorylation of arginine residues in proteins. The sequence is that of Protein-arginine kinase from Staphylococcus saprophyticus subsp. saprophyticus (strain ATCC 15305 / DSM 20229 / NCIMB 8711 / NCTC 7292 / S-41).